Consider the following 178-residue polypeptide: Oligoribonuclease (178 aa).

Positions Leu-7–Leu-168 constitute an Exonuclease domain. The active site involves Tyr-128.

The protein belongs to the oligoribonuclease family.

The protein localises to the cytoplasm. 3'-to-5' exoribonuclease specific for small oligoribonucleotides. The protein is Oligoribonuclease of Pseudomonas syringae pv. tomato (strain ATCC BAA-871 / DC3000).